The primary structure comprises 150 residues: Globin-3 (150 aa).

Residues Pro-11–Tyr-150 form the Globin domain. Heme b-binding residues include His-74 and His-106.

This sequence belongs to the globin family. Monomer.

The chain is Globin-3 from Mordacia mordax (Southern hemisphere lamprey).